Consider the following 752-residue polypeptide: Zinc finger BED domain-containing protein RICESLEEPER 3 (752 aa).

A BED-type zinc finger spans residues 106 to 166 (RKKSVVWEHF…ASCPMLKNED (61 aa)). 4 residues coordinate Zn(2+): C129, C132, H153, and C159. The HATC (Hobo-Ac-Tam3) domain stretch occupies residues 647–733 (ELEQYLEEAL…EALFCAKDWL (87 aa)).

As to quaternary structure, homodimer.

It is found in the nucleus. In terms of biological role, transposase-like protein that is essential for plant growth and development. May regulate global gene expression by recruiting other cellular factors. The protein is Zinc finger BED domain-containing protein RICESLEEPER 3 of Oryza sativa subsp. japonica (Rice).